The primary structure comprises 276 residues: Undecaprenyl-diphosphatase (276 aa).

5 consecutive transmembrane segments (helical) span residues 84–104, 115–135, 188–208, 222–242, and 250–270; these read YRLG…GLLF, LWVV…AEYL, FGFL…LPDA, QLLV…SWFL, and MYWF…LLAT.

Belongs to the UppP family.

Its subcellular location is the cell membrane. It carries out the reaction di-trans,octa-cis-undecaprenyl diphosphate + H2O = di-trans,octa-cis-undecaprenyl phosphate + phosphate + H(+). In terms of biological role, catalyzes the dephosphorylation of undecaprenyl diphosphate (UPP). Confers resistance to bacitracin. This is Undecaprenyl-diphosphatase from Mycobacterium ulcerans (strain Agy99).